The chain runs to 501 residues: Cytochrome P450 monooxygenase 76AD131 (501 aa).

The helical transmembrane segment at 1–21 (MGYYAIFAVVLPFLWTCFYLL) threads the bilayer. 2 N-linked (GlcNAc...) asparagine glycosylation sites follow: asparagine 115 and asparagine 264. Cysteine 444 is a binding site for heme.

This sequence belongs to the cytochrome P450 family. Heme is required as a cofactor. In terms of tissue distribution, highly expressed in aerial parts, in both skin and flesh tissues.

The protein resides in the membrane. The enzyme catalyses tyramine + reduced [NADPH--hemoprotein reductase] + O2 = dopamine + oxidized [NADPH--hemoprotein reductase] + H2O + H(+). It carries out the reaction 3-methoxytyramine + reduced [NADPH--hemoprotein reductase] + O2 = 3,4-dihydroxy-5-methoxyphenethylamine + oxidized [NADPH--hemoprotein reductase] + H2O + H(+). The protein operates within aromatic compound metabolism. Its pathway is alkaloid biosynthesis. In terms of biological role, cytochrome P450 monooxygenase participating in the biosynthesis of natural products derived from phenylethylamine, including mescaline, a natural hallucinogen potentially used in psychotherapeutic treatments. Catalyzes the hydroxylation of tyramine to dopamine and of 3-methoxytyramine to 3,4-dihydroxy-5-methoxyphenethylamine. The protein is Cytochrome P450 monooxygenase 76AD131 of Lophophora williamsii (Peyote).